The primary structure comprises 678 residues: THO complex subunit 5 homolog A (678 aa).

Disordered regions lie at residues 1–35 (MASD…YSEE) and 294–329 (ALFK…VQLD). The Nuclear localization signal motif lies at 7–10 (KKRK). Residues 14–35 (NRNEDVKRGRHEDQEGRYYSEE) are compositionally biased toward basic and acidic residues. Positions 301–314 (DSQDDESDSDAEEE) are enriched in acidic residues.

It belongs to the THOC5 family. As to quaternary structure, component of the THO subcomplex, which is composed of thoc1, thoc2, thoc3, thoc5, thoc6 and thoc7. Component of the transcription/export (TREX) complex at least composed of alyref/thoc4, ddx39b, sarnp/cip29, chtop and the THO subcomplex. Interacts with thoc7.

The protein localises to the nucleus. The protein resides in the nucleus speckle. Its subcellular location is the cytoplasm. Its function is as follows. Component of the THO subcomplex of the TREX complex which is thought to couple mRNA transcription, processing and nuclear export, and which specifically associates with spliced mRNA and not with unspliced pre-mRNA. Plays a key structural role in the oligomerization of the THO-ddx39b complex. TREX is recruited to spliced mRNAs by a transcription-independent mechanism, binds to mRNA upstream of the exon-junction complex (EJC) and is recruited in a splicing- and cap-dependent manner to a region near the 5' end of the mRNA where it functions in mRNA export to the cytoplasm via the TAP/NXF1 pathway. May be involved in cell differentiation. The chain is THO complex subunit 5 homolog A (thoc5-a) from Xenopus laevis (African clawed frog).